A 291-amino-acid chain; its full sequence is Fructose-1,6-bisphosphatase class 1 1 (291 aa).

Residues Glu78, Asp95, Leu97, and Asp98 each contribute to the Mg(2+) site. Residues 98-101, Tyr203, and Lys233 each bind substrate; that span reads DGSS. A Mg(2+)-binding site is contributed by Glu239.

The protein belongs to the FBPase class 1 family. In terms of assembly, homotetramer. The cofactor is Mg(2+).

Its subcellular location is the cytoplasm. The enzyme catalyses beta-D-fructose 1,6-bisphosphate + H2O = beta-D-fructose 6-phosphate + phosphate. The protein operates within carbohydrate biosynthesis; gluconeogenesis. The protein is Fructose-1,6-bisphosphatase class 1 1 of Haloarcula marismortui (strain ATCC 43049 / DSM 3752 / JCM 8966 / VKM B-1809) (Halobacterium marismortui).